A 297-amino-acid chain; its full sequence is Tyrosine recombinase XerD (297 aa).

The Core-binding (CB) domain occupies 1-86 (MNDLIEDFLH…SLRSFFHYLM (86 aa)). Positions 107-291 (GLPKVLNLDD…TKLRLKDVYK (185 aa)) constitute a Tyr recombinase domain. Active-site residues include arginine 147, lysine 171, histidine 243, arginine 246, and histidine 269. Tyrosine 278 acts as the O-(3'-phospho-DNA)-tyrosine intermediate in catalysis.

This sequence belongs to the 'phage' integrase family. XerD subfamily. In terms of assembly, forms a cyclic heterotetrameric complex composed of two molecules of XerC and two molecules of XerD.

Its subcellular location is the cytoplasm. Its function is as follows. Site-specific tyrosine recombinase, which acts by catalyzing the cutting and rejoining of the recombining DNA molecules. The XerC-XerD complex is essential to convert dimers of the bacterial chromosome into monomers to permit their segregation at cell division. It also contributes to the segregational stability of plasmids. This chain is Tyrosine recombinase XerD, found in Listeria monocytogenes serotype 4b (strain F2365).